Consider the following 966-residue polypeptide: Alanine--tRNA ligase, cytoplasmic (966 aa).

4 residues coordinate Zn(2+): H604, H608, C723, and H727.

The protein belongs to the class-II aminoacyl-tRNA synthetase family. Monomer. The cofactor is Zn(2+).

It localises to the cytoplasm. It carries out the reaction tRNA(Ala) + L-alanine + ATP = L-alanyl-tRNA(Ala) + AMP + diphosphate. Functionally, catalyzes the attachment of alanine to tRNA(Ala) in a two-step reaction: alanine is first activated by ATP to form Ala-AMP and then transferred to the acceptor end of tRNA(Ala). Also edits incorrectly charged tRNA(Ala) via its editing domain. This Drosophila melanogaster (Fruit fly) protein is Alanine--tRNA ligase, cytoplasmic.